The chain runs to 256 residues: Alcohol dehydrogenase (256 aa).

12-35 (FVAGLGGIGLDTSKELLKRDLKNL) serves as a coordination point for NAD(+). Residue Ser140 participates in substrate binding. The Proton acceptor role is filled by Tyr153.

The protein belongs to the short-chain dehydrogenases/reductases (SDR) family. In terms of assembly, homodimer.

It carries out the reaction a primary alcohol + NAD(+) = an aldehyde + NADH + H(+). It catalyses the reaction a secondary alcohol + NAD(+) = a ketone + NADH + H(+). In Drosophila sechellia (Fruit fly), this protein is Alcohol dehydrogenase (Adh).